The chain runs to 322 residues: 4-hydroxy-3-methylbut-2-enyl diphosphate reductase (322 aa).

Cysteine 15 serves as a coordination point for [4Fe-4S] cluster. (2E)-4-hydroxy-3-methylbut-2-enyl diphosphate contacts are provided by histidine 44 and histidine 77. Dimethylallyl diphosphate-binding residues include histidine 44 and histidine 77. The isopentenyl diphosphate site is built by histidine 44 and histidine 77. Cysteine 99 provides a ligand contact to [4Fe-4S] cluster. Position 127 (histidine 127) interacts with (2E)-4-hydroxy-3-methylbut-2-enyl diphosphate. Histidine 127 is a binding site for dimethylallyl diphosphate. Residue histidine 127 participates in isopentenyl diphosphate binding. Glutamate 129 (proton donor) is an active-site residue. Position 168 (threonine 168) interacts with (2E)-4-hydroxy-3-methylbut-2-enyl diphosphate. Cysteine 198 contributes to the [4Fe-4S] cluster binding site. The (2E)-4-hydroxy-3-methylbut-2-enyl diphosphate site is built by serine 226, serine 227, asparagine 228, and serine 270. Serine 226, serine 227, asparagine 228, and serine 270 together coordinate dimethylallyl diphosphate. Residues serine 226, serine 227, asparagine 228, and serine 270 each coordinate isopentenyl diphosphate.

This sequence belongs to the IspH family. It depends on [4Fe-4S] cluster as a cofactor.

It carries out the reaction isopentenyl diphosphate + 2 oxidized [2Fe-2S]-[ferredoxin] + H2O = (2E)-4-hydroxy-3-methylbut-2-enyl diphosphate + 2 reduced [2Fe-2S]-[ferredoxin] + 2 H(+). The enzyme catalyses dimethylallyl diphosphate + 2 oxidized [2Fe-2S]-[ferredoxin] + H2O = (2E)-4-hydroxy-3-methylbut-2-enyl diphosphate + 2 reduced [2Fe-2S]-[ferredoxin] + 2 H(+). Its pathway is isoprenoid biosynthesis; dimethylallyl diphosphate biosynthesis; dimethylallyl diphosphate from (2E)-4-hydroxy-3-methylbutenyl diphosphate: step 1/1. The protein operates within isoprenoid biosynthesis; isopentenyl diphosphate biosynthesis via DXP pathway; isopentenyl diphosphate from 1-deoxy-D-xylulose 5-phosphate: step 6/6. Its function is as follows. Catalyzes the conversion of 1-hydroxy-2-methyl-2-(E)-butenyl 4-diphosphate (HMBPP) into a mixture of isopentenyl diphosphate (IPP) and dimethylallyl diphosphate (DMAPP). Acts in the terminal step of the DOXP/MEP pathway for isoprenoid precursor biosynthesis. This Neisseria gonorrhoeae (strain ATCC 700825 / FA 1090) protein is 4-hydroxy-3-methylbut-2-enyl diphosphate reductase.